A 338-amino-acid polypeptide reads, in one-letter code: tRNA N6-adenosine threonylcarbamoyltransferase (338 aa).

Fe cation is bound by residues His-109 and His-113. Residues 132-136 (AISGA), Asp-165, Gly-178, and Asn-277 each bind substrate. Asp-302 lines the Fe cation pocket.

The protein belongs to the KAE1 / TsaD family. Requires Fe(2+) as cofactor.

It is found in the cytoplasm. It catalyses the reaction L-threonylcarbamoyladenylate + adenosine(37) in tRNA = N(6)-L-threonylcarbamoyladenosine(37) in tRNA + AMP + H(+). Required for the formation of a threonylcarbamoyl group on adenosine at position 37 (t(6)A37) in tRNAs that read codons beginning with adenine. Is involved in the transfer of the threonylcarbamoyl moiety of threonylcarbamoyl-AMP (TC-AMP) to the N6 group of A37, together with TsaE and TsaB. TsaD likely plays a direct catalytic role in this reaction. In Chlamydia trachomatis serovar A (strain ATCC VR-571B / DSM 19440 / HAR-13), this protein is tRNA N6-adenosine threonylcarbamoyltransferase.